Here is a 661-residue protein sequence, read N- to C-terminus: MATTLTPTQRYAAGALLALALRQAQIHQSVLLGAHHHHDDDDEEQGRTSTSSGGGGGSSSSSSNSGAGADADLWTHDSHGLLRPVFRFLEIDPKAWSGLEETAASSEAKHHIGAFLRIIFEEDGESSSDRSVQELALAKGVDVMVMSLGNDSEVGNTIKGGDQDALPSSSGTDKSPGESSHDDQLGINKLTLDDIPANNHRKMALLFALLSACVADKPVSQEEEDRKSTRFRKGYDARHRVALRLLSTWLDVKWIKMEAIEVMVACSAMAAAKEQEQSQESASPKSKWEKWKRGGIIGAAALTGGALLAITGGLAAPAIAAGFGALAPTLGTLVPVIGASGFAAMATAAGSVAGSVAVAASFGAAGAGLTGSKMARRIGSVKEFEFKPIGENHNQGRLAVGILISGFAFDEDDFCRPWEGWQDNLERYILQWESKHIIAVSTAIQDWLTSRLAMELMKQGAMRTVLSGLLAAFAWPATLLAATDFIDSKWSVAIDRSDKAGKMLAEVLLKGLQGNRPVTLIGFSLGARVIFKCLQELALSSDNEGLVERVVLLGAPVSVKGERWEAARKMVAGRFVNVYSTDDWILGVTFRASLLTQGLAGIQAIDVPGVENVDVTELVDGHSSYLSAAQQILEHLELNTYYPVFVPLSAANEETDGTVAQ.

2 disordered regions span residues 34-71 (AHHH…GADA) and 154-185 (VGNT…DDQL). Over residues 59–69 (SSSSSNSGAGA) the composition is skewed to low complexity. Positions 175–184 (SPGESSHDDQ) are enriched in basic and acidic residues. Helical transmembrane passes span 306-326 (ALLA…FGAL), 333-353 (LVPV…GSVA), 355-375 (SVAV…SKMA), and 466-486 (LSGL…TDFI).

Belongs to the TMCO4 family. Interacts with PKS10/PKS2 and 4CLL9/ACOS12.

It localises to the endoplasmic reticulum membrane. Functionally, involved in anther lipids biosynthesis and is required for tapetum degradation and pollen wall formation. Required for the formation of Ubisch bodies and microspores. Possesses lipase activity in vitro toward two synthetic substrates, p-nitrophenyl acetate (pNPA) and p-nitrophenyl butyrate (pNPB). The protein is Transmembrane and coiled-coil domain-containing protein STS1 of Oryza sativa subsp. japonica (Rice).